A 416-amino-acid polypeptide reads, in one-letter code: Phosphatidylinositol 5-phosphate 4-kinase type-2 gamma (416 aa).

The 378-residue stretch at 38 to 415 (ASDPMLSVFM…RFREFISNIF (378 aa)) folds into the PIPK domain.

In terms of processing, phosphorylated, phosphorylation is induced by EGF.

It is found in the endoplasmic reticulum. The protein resides in the cytoplasm. The enzyme catalyses a 1,2-diacyl-sn-glycero-3-phospho-(1D-myo-inositol-5-phosphate) + ATP = a 1,2-diacyl-sn-glycero-3-phospho-(1D-myo-inositol-4,5-bisphosphate) + ADP + H(+). It carries out the reaction 1,2-dihexadecanoyl-sn-glycero-3-phospho-(1D-myo-inositol-5-phosphate) + ATP = 1,2-dihexadecanoyl-sn-glycero-3-phospho-(1D-myo-inositol-4,5-bisphosphate) + ADP + H(+). It catalyses the reaction 1,2-dihexadecanoyl-sn-glycero-3-phospho-(1D-myo-inositol-5-phosphate) + GTP = 1,2-dihexadecanoyl-sn-glycero-3-phospho-(1D-myo-inositol-4,5-bisphosphate) + GDP + H(+). In terms of biological role, phosphatidylinositol 5-phosphate 4-kinase with low enzymatic activity. May be a GTP sensor, has higher GTP-dependent kinase activity than ATP-dependent kinase activity. In Danio rerio (Zebrafish), this protein is Phosphatidylinositol 5-phosphate 4-kinase type-2 gamma (pip4k2c).